The chain runs to 1097 residues: DNA-directed RNA polymerase subunit beta (1097 aa).

The tract at residues 1072-1097 (QDVNPRRSTPSRPTYESLGVADYDED) is disordered.

The protein belongs to the RNA polymerase beta chain family. In cyanobacteria the RNAP catalytic core is composed of 2 alpha, 1 beta, 1 beta', 1 gamma and 1 omega subunit. When a sigma factor is associated with the core the holoenzyme is formed, which can initiate transcription.

The catalysed reaction is RNA(n) + a ribonucleoside 5'-triphosphate = RNA(n+1) + diphosphate. Functionally, DNA-dependent RNA polymerase catalyzes the transcription of DNA into RNA using the four ribonucleoside triphosphates as substrates. This Prochlorococcus marinus (strain MIT 9303) protein is DNA-directed RNA polymerase subunit beta.